Reading from the N-terminus, the 239-residue chain is Ribose-5-phosphate isomerase A (239 aa).

Substrate contacts are provided by residues 40–43 (SGST), 96–99 (DGAD), and 110–113 (KGGG). The active-site Proton acceptor is the Glu119. Lys137 contacts substrate.

Belongs to the ribose 5-phosphate isomerase family. In terms of assembly, homodimer.

It carries out the reaction aldehydo-D-ribose 5-phosphate = D-ribulose 5-phosphate. It participates in carbohydrate degradation; pentose phosphate pathway; D-ribose 5-phosphate from D-ribulose 5-phosphate (non-oxidative stage): step 1/1. Catalyzes the reversible conversion of ribose-5-phosphate to ribulose 5-phosphate. The polypeptide is Ribose-5-phosphate isomerase A (Methanococcus maripaludis (strain DSM 14266 / JCM 13030 / NBRC 101832 / S2 / LL)).